The sequence spans 257 residues: Transmembrane protein C257L (257 aa).

The next 2 helical transmembrane spans lie at 123–143 and 163–183; these read LELLGYSPTSLIGGDLMFTAL and MMIFFLIILLCIILGIFYVLV.

The protein belongs to the asfivirus C257R family.

Its subcellular location is the host membrane. The protein resides in the virion. This Ornithodoros (relapsing fever ticks) protein is Transmembrane protein C257L.